Here is a 655-residue protein sequence, read N- to C-terminus: D-xylonate dehydratase YjhG (655 aa).

It belongs to the IlvD/Edd family.

The catalysed reaction is D-xylonate = 2-dehydro-3-deoxy-D-arabinonate + H2O. Its activity is regulated as follows. Activity is increased in the presence of Mn(+) and Mg(2+). Inhibited by thiol compounds. Functionally, catalyzes the dehydration of D-xylonic acid to form 2-dehydro-3-deoxy-D-pentonate. The polypeptide is D-xylonate dehydratase YjhG (yjhG) (Escherichia coli (strain K12)).